Reading from the N-terminus, the 602-residue chain is MVNNMTDLTAHDAAPAWQTRDHLDDPVIGELRNRFGPDAFTVQPTRTGVPVVWVKREQLLEVGDFLKKLPKPYVMLFDLHGMDERLRTHRDGLPAADFSVFYHLISIDRNRDIMLKVALSENDLHLPTFTKLFPNANWYERETWEMFGMTFDGHPNLRRIMMPPTWEGHPLRKDYPARATEFDPFELTKAKQDLEMEALTFKPEEWGMKRSTDNEDFMFLNLGPNHPSAHGAFRIILQLDGEEIVDCVPDIGYHHRGAEKMGERQSWHSYIPYTDRIEYLGGCVNEMPYVLAVEKLAGITVPDRVNVIRVMLSELFRINSHLLYISTFIQDVGAMTPVFFAFTDRQKIYDLVEAITGFRMHPAWFRIGGVAHDLPRGWDRLLREFLEWMPKRLDSYEKAALRNTILKGRSVGVAAYTAKEALEWGTTGAGLRATGIGFDVRKWRPYSGYENFDFEVPTGGGVSDCYTRVMLKVEELRQSLRILQQCLDNMPEGPFKADHPLTTPPPKERTLQHIETLITHFLQVSWGPVMPANESFQMIEATKGINSYYLTSDGSTMSYRTRVRTPSFAHLQQIPSAIRGSLVSDLIVYLGSIDFVMSDVDR.

Residues 1–192 form an NADH dehydrogenase I subunit C region; sequence MVNNMTDLTA…DPFELTKAKQ (192 aa). Positions 216-602 are NADH dehydrogenase I subunit D; sequence DFMFLNLGPN…IDFVMSDVDR (387 aa).

This sequence in the N-terminal section; belongs to the complex I 30 kDa subunit family. In the C-terminal section; belongs to the complex I 49 kDa subunit family. NDH-1 is composed of 13 different subunits. Subunits NuoB, CD, E, F, and G constitute the peripheral sector of the complex.

It localises to the cell inner membrane. It carries out the reaction a quinone + NADH + 5 H(+)(in) = a quinol + NAD(+) + 4 H(+)(out). Its function is as follows. NDH-1 shuttles electrons from NADH, via FMN and iron-sulfur (Fe-S) centers, to quinones in the respiratory chain. The immediate electron acceptor for the enzyme in this species is believed to be ubiquinone. Couples the redox reaction to proton translocation (for every two electrons transferred, four hydrogen ions are translocated across the cytoplasmic membrane), and thus conserves the redox energy in a proton gradient. The polypeptide is NADH-quinone oxidoreductase subunit C/D (Klebsiella pneumoniae (strain 342)).